The chain runs to 150 residues: Deoxyuridine 5'-triphosphate nucleotidohydrolase (150 aa).

Residues 70–72 (RSG), Asn-82, 86–88 (LID), and Met-96 contribute to the substrate site.

This sequence belongs to the dUTPase family. The cofactor is Mg(2+).

It carries out the reaction dUTP + H2O = dUMP + diphosphate + H(+). The protein operates within pyrimidine metabolism; dUMP biosynthesis; dUMP from dCTP (dUTP route): step 2/2. Its function is as follows. This enzyme is involved in nucleotide metabolism: it produces dUMP, the immediate precursor of thymidine nucleotides and it decreases the intracellular concentration of dUTP so that uracil cannot be incorporated into DNA. The sequence is that of Deoxyuridine 5'-triphosphate nucleotidohydrolase from Baumannia cicadellinicola subsp. Homalodisca coagulata.